The sequence spans 183 residues: Small ribosomal subunit protein eS10z (183 aa).

Positions 91-183 are disordered; it reads LKKSARPPGR…GAGPTSSSME (93 aa). The span at 109 to 130 shows a compositional bias: basic and acidic residues; that stretch reads DRPRGPPRFEGDRPRFGDRDGY. Composition is skewed to gly residues over residues 131–146 and 161–175; these read RGGPRGAPGDFGGEKG and GRPGFGRGGGGGFGA.

This sequence belongs to the eukaryotic ribosomal protein eS10 family.

The protein localises to the cytoplasm. This chain is Small ribosomal subunit protein eS10z, found in Oryza sativa subsp. japonica (Rice).